The following is a 494-amino-acid chain: 3-octaprenyl-4-hydroxybenzoate carboxy-lyase (494 aa).

N172 serves as a coordination point for Mn(2+). Prenylated FMN-binding positions include I175–R177, R189–L191, and R194–G195. Residue E238 participates in Mn(2+) binding. D287 acts as the Proton donor in catalysis.

The protein belongs to the UbiD family. Homohexamer. The cofactor is prenylated FMN. It depends on Mn(2+) as a cofactor.

It localises to the cell membrane. The enzyme catalyses a 4-hydroxy-3-(all-trans-polyprenyl)benzoate + H(+) = a 2-(all-trans-polyprenyl)phenol + CO2. The protein operates within cofactor biosynthesis; ubiquinone biosynthesis. Functionally, catalyzes the decarboxylation of 3-octaprenyl-4-hydroxy benzoate to 2-octaprenylphenol, an intermediate step in ubiquinone biosynthesis. This Escherichia coli O139:H28 (strain E24377A / ETEC) protein is 3-octaprenyl-4-hydroxybenzoate carboxy-lyase.